The following is a 434-amino-acid chain: ATP phosphoribosyltransferase regulatory subunit (434 aa).

Belongs to the class-II aminoacyl-tRNA synthetase family. HisZ subfamily. Heteromultimer composed of HisG and HisZ subunits.

Its subcellular location is the cytoplasm. The protein operates within amino-acid biosynthesis; L-histidine biosynthesis; L-histidine from 5-phospho-alpha-D-ribose 1-diphosphate: step 1/9. Required for the first step of histidine biosynthesis. May allow the feedback regulation of ATP phosphoribosyltransferase activity by histidine. This is ATP phosphoribosyltransferase regulatory subunit from Geobacter metallireducens (strain ATCC 53774 / DSM 7210 / GS-15).